The sequence spans 604 residues: Sulfite reductase [NADPH] flavoprotein alpha-component (604 aa).

Positions 66–204 constitute a Flavodoxin-like domain; it reads VTVLSASQTG…AADGWTDNIA (139 aa). Residues 72–77, 119–122, and 155–164 each bind FMN; these read SQTGNA, STQG, and LGDSSYPNFC. Residues 239-453 form the FAD-binding FR-type domain; the sequence is ADPFPAALLA…VERNDGFRLP (215 aa). Residues T327, Q361, 391–394, 409–411, and 424–427 contribute to the FAD site; these read RLYS, TVG, and GGAS. Residues 524-525, 530-534, and D566 each bind NADP(+); these read SR and KIYVQ. Residue Y604 participates in FAD binding.

The protein belongs to the NADPH-dependent sulphite reductase flavoprotein subunit CysJ family. This sequence in the N-terminal section; belongs to the flavodoxin family. It in the C-terminal section; belongs to the flavoprotein pyridine nucleotide cytochrome reductase family. As to quaternary structure, alpha(8)-beta(8). The alpha component is a flavoprotein, the beta component is a hemoprotein. FAD is required as a cofactor. Requires FMN as cofactor.

It carries out the reaction hydrogen sulfide + 3 NADP(+) + 3 H2O = sulfite + 3 NADPH + 4 H(+). The protein operates within sulfur metabolism; hydrogen sulfide biosynthesis; hydrogen sulfide from sulfite (NADPH route): step 1/1. Functionally, component of the sulfite reductase complex that catalyzes the 6-electron reduction of sulfite to sulfide. This is one of several activities required for the biosynthesis of L-cysteine from sulfate. The flavoprotein component catalyzes the electron flow from NADPH -&gt; FAD -&gt; FMN to the hemoprotein component. This is Sulfite reductase [NADPH] flavoprotein alpha-component from Neisseria meningitidis serogroup A / serotype 4A (strain DSM 15465 / Z2491).